Here is a 443-residue protein sequence, read N- to C-terminus: Methyl-coenzyme M reductase II subunit beta (443 aa).

Residue Tyr-367 participates in coenzyme M binding. Residue Gly-369 participates in coenzyme B binding.

Belongs to the methyl-coenzyme M reductase beta subunit family. In terms of assembly, MCR is a hexamer of two alpha, two beta, and two gamma chains, forming a dimer of heterotrimers. It depends on coenzyme F430 as a cofactor.

The catalysed reaction is coenzyme B + methyl-coenzyme M = methane + coenzyme M-coenzyme B heterodisulfide. The protein operates within one-carbon metabolism; methyl-coenzyme M reduction; methane from methyl-coenzyme M: step 1/1. Its function is as follows. Component of the methyl-coenzyme M reductase (MCR) I that catalyzes the reductive cleavage of methyl-coenzyme M (CoM-S-CH3 or 2-(methylthio)ethanesulfonate) using coenzyme B (CoB or 7-mercaptoheptanoylthreonine phosphate) as reductant which results in the production of methane and the mixed heterodisulfide of CoB and CoM (CoM-S-S-CoB). This is the final step in methanogenesis. This chain is Methyl-coenzyme M reductase II subunit beta (mrtB), found in Methanothermus fervidus (strain ATCC 43054 / DSM 2088 / JCM 10308 / V24 S).